The chain runs to 33 residues: MSDIN-like toxin proprotein 2 (33 aa).

Residues 1 to 10 constitute a propeptide that is removed on maturation; it reads MSDINATRLP. The cyclopeptide (Ile-Pro) cross-link spans 11–18; that stretch reads IILAPIIP. A propeptide spanning residues 19-33 is cleaved from the precursor; sequence CINDDVNSTLTSGER.

It belongs to the MSDIN fungal toxin family. Post-translationally, processed by the macrocyclase-peptidase enzyme POPB to yield a toxic cyclic octapeptide. POPB first removes 10 residues from the N-terminus. Conformational trapping of the remaining peptide forces the enzyme to release this intermediate rather than proceed to macrocyclization. The enzyme rebinds the remaining peptide in a different conformation and catalyzes macrocyclization of the N-terminal 8 residues.

In terms of biological role, probable toxin that belongs to the MSDIN-like toxin family responsible for a large number of food poisoning cases and deaths. In Amanita phalloides (Death cap), this protein is MSDIN-like toxin proprotein 2.